A 324-amino-acid chain; its full sequence is Dermonecrotic toxin Hl-PLD1 (324 aa).

An N-terminal signal peptide occupies residues 1–35; the sequence is MAHCYYNSKRGCNRVMKTVALVVLISTVMVEESRG. His50 is a catalytic residue. Mg(2+)-binding residues include Glu70 and Asp72. The Nucleophile role is filled by His86. 2 cysteine pairs are disulfide-bonded: Cys90-Cys96 and Cys92-Cys236. Asp130 is a binding site for Mg(2+).

The protein belongs to the arthropod phospholipase D family. Class II subfamily. Mg(2+) serves as cofactor. As to expression, expressed by the venom gland.

It localises to the secreted. It carries out the reaction an N-(acyl)-sphingosylphosphocholine = an N-(acyl)-sphingosyl-1,3-cyclic phosphate + choline. It catalyses the reaction an N-(acyl)-sphingosylphosphoethanolamine = an N-(acyl)-sphingosyl-1,3-cyclic phosphate + ethanolamine. The catalysed reaction is a 1-acyl-sn-glycero-3-phosphocholine = a 1-acyl-sn-glycero-2,3-cyclic phosphate + choline. The enzyme catalyses a 1-acyl-sn-glycero-3-phosphoethanolamine = a 1-acyl-sn-glycero-2,3-cyclic phosphate + ethanolamine. Dermonecrotic toxins cleave the phosphodiester linkage between the phosphate and headgroup of certain phospholipids (sphingolipid and lysolipid substrates), forming an alcohol (often choline) and a cyclic phosphate. This toxin acts on sphingomyelin (SM) with a high activity. It may also act on ceramide phosphoethanolamine (CPE), lysophosphatidylcholine (LPC) and lysophosphatidylethanolamine (LPE), but not on lysophosphatidylserine (LPS), and lysophosphatidylglycerol (LPG). It acts by transphosphatidylation, releasing exclusively cyclic phosphate products as second products. In vivo, shows dermonecrotic activity when intradermally injected into rabbit skin and is lethal to mice. Induces increased vascular permeability, edema, inflammatory response, and platelet aggregation. Does not show hemolytic activity (at up to 50 ug). The polypeptide is Dermonecrotic toxin Hl-PLD1 (Hemiscorpius lepturus (Scorpion)).